A 382-amino-acid polypeptide reads, in one-letter code: Intermediate transcription factor 3 large subunit (382 aa).

It belongs to the poxviruses A23 family. As to quaternary structure, heterodimer of a 45 kDa and a 32 kDa subunit.

Acts with RNA polymerase to initiate transcription from intermediate gene promoters. In Camelus, this protein is Intermediate transcription factor 3 large subunit (VITF3L).